The chain runs to 146 residues: MTIKLHDLQPARGSKTTRTRVGRGEASKGKTAGRGTKGTKARKQVPVTFEGGQMPIHMRLPKLKGFRNRLRTEYAVVNVGDISRLFPEGGTISVNDLVAKKAIRKNSLVKILGDGKLTVKVTLSAHKFSGSARHKITVAGGSVTEL.

Residues 1–42 form a disordered region; that stretch reads MTIKLHDLQPARGSKTTRTRVGRGEASKGKTAGRGTKGTKAR.

Belongs to the universal ribosomal protein uL15 family. In terms of assembly, part of the 50S ribosomal subunit.

Its function is as follows. Binds to the 23S rRNA. The sequence is that of Large ribosomal subunit protein uL15 from Mycobacterium leprae (strain Br4923).